An 872-amino-acid chain; its full sequence is DNA mismatch repair protein MutS (872 aa).

Gly-623–Ser-630 contributes to the ATP binding site.

Belongs to the DNA mismatch repair MutS family.

This protein is involved in the repair of mismatches in DNA. It is possible that it carries out the mismatch recognition step. This protein has a weak ATPase activity. In Trichlorobacter lovleyi (strain ATCC BAA-1151 / DSM 17278 / SZ) (Geobacter lovleyi), this protein is DNA mismatch repair protein MutS.